A 183-amino-acid chain; its full sequence is Type II secretion system protein H (183 aa).

Residues 1–8 (MRRHRQSG) constitute a propeptide, leader sequence. The residue at position 9 (phenylalanine 9) is an N-methylphenylalanine. The chain crosses the membrane as a helical span at residues 9–28 (FTLLEVLLVAMLMGLVATAV).

This sequence belongs to the GSP H family. Type II secretion is composed of four main components: the outer membrane complex, the inner membrane complex, the cytoplasmic secretion ATPase and the periplasm-spanning pseudopilus. Interacts with core component ExeG. Cleaved by prepilin peptidase. Post-translationally, methylated by prepilin peptidase at the amino group of the N-terminal phenylalanine once the leader sequence is cleaved by prepilin peptidase.

It is found in the cell inner membrane. Functionally, component of the type II secretion system required for the energy-dependent secretion of extracellular factors such as proteases and toxins from the periplasm. Part of the pseudopilus tip complex that is critical for the recognition and binding of secretion substrates. This chain is Type II secretion system protein H (exeH), found in Aeromonas hydrophila.